Reading from the N-terminus, the 111-residue chain is Nucleoid-associated protein Fphi_0115 (111 aa).

The segment at 1–27 (MNFDMSKLMQQAQKMQEQMKKAQQERE) is disordered. The segment covering 17 to 27 (EQMKKAQQERE) has biased composition (basic and acidic residues).

The protein belongs to the YbaB/EbfC family. Homodimer.

It localises to the cytoplasm. It is found in the nucleoid. Binds to DNA and alters its conformation. May be involved in regulation of gene expression, nucleoid organization and DNA protection. The chain is Nucleoid-associated protein Fphi_0115 from Francisella philomiragia subsp. philomiragia (strain ATCC 25017 / CCUG 19701 / FSC 153 / O#319-036).